A 140-amino-acid polypeptide reads, in one-letter code: Organic hydroperoxide resistance protein-like (140 aa).

It belongs to the OsmC/Ohr family.

In Staphylococcus aureus (strain USA300), this protein is Organic hydroperoxide resistance protein-like.